Here is a 136-residue protein sequence, read N- to C-terminus: Small ribosomal subunit protein uS11c (136 aa).

Belongs to the universal ribosomal protein uS11 family. As to quaternary structure, part of the 30S ribosomal subunit.

Its subcellular location is the plastid. The protein resides in the chloroplast. This is Small ribosomal subunit protein uS11c from Helianthus annuus (Common sunflower).